A 267-amino-acid polypeptide reads, in one-letter code: 14-3-3-like protein GF14 chi (267 aa).

An N-acetylalanine modification is found at Ala2. Ser72 and Ser195 each carry phosphoserine. Residue Thr216 is modified to Phosphothreonine. Ser267 is subject to Phosphoserine.

Belongs to the 14-3-3 family. Interacts with TPK1. Interacts with the isocitrate dehydrogenase IDH3, and malate dehydrogenases MDH1 and MDH2. Interacts with DREB1A and DREB1B in the nucleus. Interacts with CINV1.

It localises to the nucleus. It is found in the cytoplasm. In terms of biological role, is associated with a DNA binding complex that binds to the G box, a well-characterized cis-acting DNA regulatory element found in plant genes. Involved in the regulation of nutrient metabolism. The protein is 14-3-3-like protein GF14 chi (GRF1) of Arabidopsis thaliana (Mouse-ear cress).